The chain runs to 183 residues: CASP-like protein UU1 (183 aa).

Residues 1–33 are Cytoplasmic-facing; sequence MEESQQQSTKFDAPPSPYVPSRVYLAQIYWKKP. The helical transmembrane segment at 34–54 threads the bilayer; sequence AIVVLRVLQFVFSLIAFSVMA. Residues 55 to 72 are Extracellular-facing; it reads DLLHDVQGSIKSLSYTVA. Residues 73-93 form a helical membrane-spanning segment; sequence IGVLACAYALAQLSFSLWCVI. Topologically, residues 94-118 are cytoplasmic; sequence RGATSSSGVTPLYQYATFICDQMST. A helical membrane pass occupies residues 119–139; it reads YFLISAASATATLIDVSGVCG. Residues 140-156 are Extracellular-facing; sequence SNGSGTNLCSRSTASVT. A glycan (N-linked (GlcNAc...) asparagine) is linked at asparagine 141. A helical transmembrane segment spans residues 157-177; it reads FAFLAFLAFSASSVLTGYYLV. Topologically, residues 178 to 183 are cytoplasmic; the sequence is KCILKA.

The protein belongs to the Casparian strip membrane proteins (CASP) family. Homodimer and heterodimers.

Its subcellular location is the cell membrane. In Selaginella moellendorffii (Spikemoss), this protein is CASP-like protein UU1.